The chain runs to 1092 residues: MAAYSWWRQPSWMVDNKRSRMTPNLPWLLSALTLLHLTMHANGLKRGVQDLKCTTNNMRVWDCTWPAPLGVSPGTVKDICIKDRFHSCHPLETTNVKIPALSPGDHEVTINYLNGFQSKFTLNEKDVSLIPETPEILDLSADFFTSSLLLKWNDRGSALPHPSNATWEIKVLQNPRTEPVALVLLNTMLSGKDTVQHWNWTSDLPLQCATHSVSIRWHIDSPHFSGYKEWSDWSPLKNISWIRNTETNVFPQDKVVLAGSNMTICCMSPTKVLSGQIGNTLRPLIHLYGQTVAIHILNIPVSENSGTNIIFITDDDVYGTVVFAGYPPDVPQKLSCETHDLKEIICSWNPGRITGLVGPRNTEYTLFESISGKSAVFHRIEGLTNETYRLGVQMHPGQEIHNFTLTGRNPLGQAQSAVVINVTERVAPHDPTSLKVKDINSTVVTFSWYLPGNFTKINLLCQIEICKANSKKEVRNATIRGAEDSTYHVAVDKLNPYTAYTFRVRCSSKTFWKWSRWSDEKRHLTTEATPSKGPDTWREWSSDGKNLIVYWKPLPINEANGKILSYNVSCSLNEETQSVLEIFDPQHRAEIQLSKNDYIISVVARNSAGSSPPSKIASMEIPNDDITVEQAVGLGNRIFLTWRHDPNMTCDYVIKWCNSSRSEPCLLDWRKVPSNSTETVIESDQFQPGVRYNFYLYGCTNQGYQLLRSIIGYVEELAPIVAPNFTVEDTSADSILVKWDDIPVEELRGFLRGYLFYFQKGERDTPKTRSLEPHHSDIKLKNITDISQKTLRIADLQGKTSYHLVLRAYTHGGLGPEKSMFVVTKENSVGLIIAILIPVAVAVIVGVVTSILCYRKREWIKETFYPDIPNPENCKALQFQKSVCEGSNALKTLEMNPCTPNNVEVLESRSIVPKIEDTEIISPVAERPGERSEVDPENHVVVSYCPPIIEEEITNPAADEVGGASQVVYIDVQSMYQPQAKAEEEQDVDPVVVAGYKPQMRLPISPAVEDTAAEDEEGKTAGYRPQANVNTWNLVSPDSPRSTDSNNEVVSFGSPCSINSRQFLIPPKDEDSPKSNGGGWSFTNFFQNKPND.

Positions 1 to 43 (MAAYSWWRQPSWMVDNKRSRMTPNLPWLLSALTLLHLTMHANG) are cleaved as a signal peptide. Residues 44-828 (LKRGVQDLKC…SMFVVTKENS (785 aa)) are Extracellular-facing. In terms of domain architecture, Fibronectin type-III 1 spans 45–126 (KRGVQDLKCT…QSKFTLNEKD (82 aa)). Intrachain disulfides connect Cys-53/Cys-63 and Cys-80/Cys-88. Asn-164, Asn-199, Asn-238, and Asn-261 each carry an N-linked (GlcNAc...) asparagine glycan. 2 cysteine pairs are disulfide-bonded: Cys-208/Cys-265 and Cys-336/Cys-346. 5 Fibronectin type-III domains span residues 330–429 (VPQK…VAPH), 430–529 (DPTS…TEAT), 533–624 (GPDT…IPND), 622–714 (PNDD…IGYV), and 719–828 (PIVA…KENS). N-linked (GlcNAc...) asparagine glycosylation is found at Asn-385, Asn-402, Asn-421, Asn-440, Asn-453, and Asn-476. Cys-461 and Cys-506 form a disulfide bridge. Positions 514 to 518 (WSRWS) match the WSXWS motif motif. N-linked (GlcNAc...) asparagine glycans are attached at residues Asn-567, Asn-647, Asn-658, Asn-675, Asn-724, and Asn-782. A helical transmembrane segment spans residues 829–853 (VGLIIAILIPVAVAVIVGVVTSILC). Residues 854 to 1092 (YRKREWIKET…TNFFQNKPND (239 aa)) are Cytoplasmic-facing. The Box 1 motif motif lies at 864–872 (FYPDIPNPE). Phosphoserine is present on residues Ser-922 and Ser-1039. The disordered stretch occupies residues 1009–1092 (EDTAAEDEEG…TNFFQNKPND (84 aa)). 2 stretches are compositionally biased toward polar residues: residues 1027–1062 (ANVN…NSRQ) and 1081–1092 (SFTNFFQNKPND).

The protein belongs to the type I cytokine receptor family. Type 2 subfamily. Heterodimer composed of LIFR and IL6ST. The heterodimer formed by LIFR and IL6ST interacts with the complex formed by CNTF and CNTFR. Placenta, liver, kidney, heart, lung, brain, and embryos. The liver may be the primary site of synthesis of the secreted form.

It localises to the cell membrane. Its subcellular location is the secreted. Functionally, signal-transducing molecule. May have a common pathway with IL6ST. The soluble form inhibits the biological activity of LIF by blocking its binding to receptors on target cells. This Mus musculus (Mouse) protein is Leukemia inhibitory factor receptor (Lifr).